Consider the following 368-residue polypeptide: Phosphate acyltransferase (368 aa).

A disordered region spans residues 337 to 368; that stretch reads LGDGEHDAGGAGQASPAAGHHAEPSAAQSSKA.

The protein belongs to the PlsX family. In terms of assembly, homodimer. Probably interacts with PlsY.

It is found in the cytoplasm. It catalyses the reaction a fatty acyl-[ACP] + phosphate = an acyl phosphate + holo-[ACP]. It participates in lipid metabolism; phospholipid metabolism. Its function is as follows. Catalyzes the reversible formation of acyl-phosphate (acyl-PO(4)) from acyl-[acyl-carrier-protein] (acyl-ACP). This enzyme utilizes acyl-ACP as fatty acyl donor, but not acyl-CoA. The polypeptide is Phosphate acyltransferase (Burkholderia orbicola (strain MC0-3)).